Consider the following 395-residue polypeptide: tRNA-specific 2-thiouridylase MnmA (395 aa).

Residues 7–14 (GLSGGVDS) and Met-33 contribute to the ATP site. The interval 95–97 (NPD) is interaction with target base in tRNA. The active-site Nucleophile is the Cys-100. The cysteines at positions 100 and 200 are disulfide-linked. Position 124 (Gly-124) interacts with ATP. The tract at residues 150–152 (KDQ) is interaction with tRNA. Residue Cys-200 is the Cysteine persulfide intermediate of the active site. The interaction with tRNA stretch occupies residues 346–347 (RY).

This sequence belongs to the MnmA/TRMU family.

The protein resides in the cytoplasm. It carries out the reaction S-sulfanyl-L-cysteinyl-[protein] + uridine(34) in tRNA + AH2 + ATP = 2-thiouridine(34) in tRNA + L-cysteinyl-[protein] + A + AMP + diphosphate + H(+). Its function is as follows. Catalyzes the 2-thiolation of uridine at the wobble position (U34) of tRNA, leading to the formation of s(2)U34. This is tRNA-specific 2-thiouridylase MnmA from Christiangramia forsetii (strain DSM 17595 / CGMCC 1.15422 / KT0803) (Gramella forsetii).